The sequence spans 192 residues: 7-methyl-GTP pyrophosphatase (192 aa).

Residue Asp70 is the Proton acceptor of the active site.

The protein belongs to the Maf family. YceF subfamily. A divalent metal cation serves as cofactor.

The protein resides in the cytoplasm. The catalysed reaction is N(7)-methyl-GTP + H2O = N(7)-methyl-GMP + diphosphate + H(+). Nucleoside triphosphate pyrophosphatase that hydrolyzes 7-methyl-GTP (m(7)GTP). May have a dual role in cell division arrest and in preventing the incorporation of modified nucleotides into cellular nucleic acids. The sequence is that of 7-methyl-GTP pyrophosphatase from Xanthomonas campestris pv. campestris (strain 8004).